A 1390-amino-acid chain; its full sequence is DNA-directed RNA polymerase III subunit RPC1 (1390 aa).

Zn(2+)-binding residues include Cys-69, Cys-72, Cys-79, His-82, Cys-109, and Cys-112. Lys-144 contributes to the DNA binding site. Zn(2+) contacts are provided by Cys-156 and Cys-159. Residues Lys-167, Ser-326, Lys-348, Arg-353, Arg-360, and Arg-366 each contribute to the DNA site. Position 445 is an N6-acetyllysine (Lys-445). Residue Arg-464 participates in RNA binding. The Mg(2+) site is built by Asp-499, Asp-501, and Asp-503. RNA is bound at residue Asp-503. A bridging helix region spans residues 843 to 884 (TPTEFFFHTMAGREGLVDTAVKTAETGYMQRRLVKSLEDLCS). Residues 1029–1070 (PGSAVGALCAQSIGEPGTQMTLKTFHFAGVASMNITLGVPRI) form a trigger loop region. Arg-1159, Arg-1305, and Lys-1323 together coordinate DNA.

It belongs to the RNA polymerase beta' chain family. In terms of assembly, component of the RNA polymerase III (Pol III) (Pol III) complex consisting of 17 subunits: a ten-subunit catalytic core composed of POLR3A/RPC1, POLR3B/RPC2, POLR1C/RPAC1, POLR1D/RPAC2, POLR3K/RPC10, POLR2E/RPABC1, POLR2F/RPABC2, POLR2H/RPABC3, POLR2K/RPABC4 and POLR2L/RPABC5; a mobile stalk composed of two subunits POLR3H/RPC8 and CRCP/RPC9, protruding from the core and functioning primarily in transcription initiation; and additional subunits homologous to general transcription factors of the RNA polymerase II machinery, POLR3C/RPC3-POLR3F/RPC6-POLR3G/RPC7 heterotrimer required for transcription initiation and POLR3D/RPC4-POLR3E/RPC5 heterodimer involved in both transcription initiation and termination. Pol III exists as two alternative complexes defined by the mutually exclusive incorporation of subunit POLR3G/RPC7alpha or POLR3GL/RPC7beta. The presence of POLR3G/RPC7alpha or POLR3GL/RPC7beta differentially modulates the transcription potential of Pol III, with POLR3G/RPC7alpha specifically associated with transcription of snaR-A non-coding RNAs. As part of the RNA polymerase III complex, interacts with PKP2. The cofactor is Mg(2+). Expressed in the brain, in the cortex and the white matter (at protein level).

The protein resides in the nucleus. Its subcellular location is the cytoplasm. It is found in the cytosol. It carries out the reaction RNA(n) + a ribonucleoside 5'-triphosphate = RNA(n+1) + diphosphate. Functionally, catalytic core component of RNA polymerase III (Pol III), a DNA-dependent RNA polymerase which synthesizes small non-coding RNAs using the four ribonucleoside triphosphates as substrates. Synthesizes 5S rRNA, snRNAs, tRNAs and miRNAs from at least 500 distinct genomic loci. Pol III-mediated transcription cycle proceeds through transcription initiation, transcription elongation and transcription termination stages. During transcription initiation, Pol III is recruited to DNA promoters type I, II or III with the help of general transcription factors and other specific initiation factors. Once the polymerase has escaped from the promoter it enters the elongation phase during which RNA is actively polymerized, based on complementarity with the template DNA strand. Transcription termination involves the release of the RNA transcript and polymerase from the DNA. Forms Pol III active center together with the second largest subunit POLR3B/RPC2. Appends one nucleotide at a time to the 3' end of the nascent RNA, with POLR3A/RPC1 contributing a Mg(2+)-coordinating DxDGD motif, and POLR3B/RPC2 participating in the coordination of a second Mg(2+) ion and providing lysine residues believed to facilitate Watson-Crick base pairing between the incoming nucleotide and template base. Typically, Mg(2+) ions direct a 5' nucleoside triphosphate to form a phosphodiester bond with the 3' hydroxyl of the preceding nucleotide of the nascent RNA, with the elimination of pyrophosphate. Pol III plays a key role in sensing and limiting infection by intracellular bacteria and DNA viruses. Acts as a nuclear and cytosolic DNA sensor involved in innate immune response. Can sense non-self dsDNA that serves as template for transcription into dsRNA. The non-self RNA polymerase III transcripts, such as Epstein-Barr virus-encoded RNAs (EBERs) induce type I interferon and NF-kappa-B through the RIG-I pathway. The protein is DNA-directed RNA polymerase III subunit RPC1 of Homo sapiens (Human).